The primary structure comprises 355 residues: MLDVKNTGVFSSAFIDRLNAMTNSDDGDETADAELDSGLANSKYIDSSDEMASALSSFINRRDLEKLKGTNSDSQERILDGEEDEINHKIFDLKRTLKDNLPLDRDFIDRLKRYFKDPSDQVLALRELLNEKDLTAEQVELLTKIINEIISGSEKSVNAGINSAIQAKLFGNKMKLEPQLLRACYRGFIMGNISTTDQYIEWLGNFGFNHRHTIVNFVEQSLIVDMDSEKPSCNAYEFGFVLSKLIAIKMIRTSDVIFMKKLESSSLLKDGSLSAEQLLLTLLYIFQYPSESEQILTSVIEVSRASHEDSVVYQTYLSSVNESPHDIFKSESEREIAINILRELVTSAYKKELSR.

It is found in the secreted. The protein localises to the host cell. Functionally, necessary for the secretion of IPA invasins. This chain is Protein MxiC (mxiC), found in Shigella flexneri.